The sequence spans 150 residues: Large ribosomal subunit protein uL23m (150 aa).

This sequence belongs to the universal ribosomal protein uL23 family. As to quaternary structure, component of the mitochondrial ribosome large subunit (39S) which comprises a 16S rRNA and about 50 distinct proteins.

It is found in the mitochondrion. The protein is Large ribosomal subunit protein uL23m (mRpL23) of Drosophila melanogaster (Fruit fly).